The chain runs to 149 residues: Transcriptional repressor NrdR (149 aa).

The segment at 3–34 is a zinc-finger region; the sequence is CPFCGHLETQVVETRISEDAEFIRRRRQCGAC. One can recognise an ATP-cone domain in the interval 49 to 139; it reads PSIVKKDGRR…VYRSFEDIDE (91 aa).

It belongs to the NrdR family. Requires Zn(2+) as cofactor.

Its function is as follows. Negatively regulates transcription of bacterial ribonucleotide reductase nrd genes and operons by binding to NrdR-boxes. This is Transcriptional repressor NrdR from Polaromonas naphthalenivorans (strain CJ2).